Consider the following 401-residue polypeptide: Beta-lactamase (401 aa).

The signal sequence occupies residues 1–39 (MKLFTSTLTAKKSSTHKPLISLALSVLISTLLISETAQA). Ser-102 serves as the catalytic Acyl-ester intermediate. Tyr-188 serves as the catalytic Proton acceptor. Position 353–355 (353–355 (KTG)) interacts with substrate.

This sequence belongs to the class-C beta-lactamase family.

It localises to the secreted. It catalyses the reaction a beta-lactam + H2O = a substituted beta-amino acid. In terms of biological role, this protein is a serine beta-lactamase with a substrate specificity for cephalosporins. In Psychrobacter immobilis, this protein is Beta-lactamase (ampC).